The sequence spans 1197 residues: Transient receptor potential cation channel subfamily A member 1 (1197 aa).

Topologically, residues 1-753 are cytoplasmic; it reads MTSGDKETPK…KWNSYGKYFH (753 aa). 14 ANK repeats span residues 89-118, 122-151, 155-184, 190-219, 224-253, 265-294, 298-327, 336-365, 369-398, 443-472, 476-505, 512-541, 544-574, and 578-607; these read KGRTAAHQAAARNRVNILRYIRDQNGDFNA, AGNTPLHIAVESDAYDALDYLLSIPVDTGV, KKQAPVHLATELNKVKSLRVMGQYRNVIDI, HGRTALHLAAIYDHEECARILITEFDACPR, NGYYPIHEAAKNASSKTMEVFFQWGEQRGC, EGNVPLHSAVHGGDIKAVELCLKSGAKIST, DLSTPVHLACAQGAIDIVKLMFEMQPMEKR, QKMTPLHCASMFDHPDIVSYLVAEGADINA, EHRSPLLLAASRSGWKTVHLLIRLGACISV, MGCSPLHYASRDGHIRSLENLIRLGACINL, NNESPLHFAARYGRYNTVRQLLDSEKGSFI, AGMTPLHISSQQGHTRVVQLLLNRGALLHR, TGRNPLQLAAMSGYTETIELLHSVHSHLLDQ, and DGNTALHLATMENKPHAISVLMSMGCKLVY. Residues 754-774 traverse the membrane as a helical segment; the sequence is LANLLIYSIFLVFVTIYSSLM. The Extracellular portion of the chain corresponds to 775–827; sequence MNNIELKAGDNKTMSQYCNMGWEQLTMNLSQNPSVASQIRLDSCEERINRTTA. Asparagine 785, asparagine 802, and asparagine 823 each carry an N-linked (GlcNAc...) asparagine glycan. Residues 828 to 848 form a helical membrane-spanning segment; the sequence is ILFCAVVIVVYILLNSMRELI. Residues 849–856 lie on the Cytoplasmic side of the membrane; it reads QIYQQKLH. The helical transmembrane segment at 857-877 threads the bilayer; it reads YILETVNLISWVLYISALVMV. The Extracellular segment spans residues 878–889; sequence TPAFQPDGGINT. A helical transmembrane segment spans residues 890–910; that stretch reads IHYSAASIAVFLSWFRLLLFL. At 911 to 932 the chain is on the cytoplasmic side; sequence QRFDQVGIYVVMFLEILQTLIK. The chain crosses the membrane as a helical span at residues 933 to 953; it reads VLMVFSILIIAFGLAFYILLS. Over 954–968 the chain is Extracellular; sequence KIIDPQPNHLSFSNI. The segment at residues 969-989 is an intramembrane region (pore-forming); the sequence is PMSLLRTFSMMLGELDFVGTY. Residues 990–1004 are Extracellular-facing; sequence VNTYYRDQLKVPMTS. The helical transmembrane segment at 1005–1025 threads the bilayer; sequence FLILSVFMILMPILLMNLLIG. Topologically, residues 1026-1197 are cytoplasmic; the sequence is LAVGDIESVR…RAALSFNKSM (172 aa).

This sequence belongs to the transient receptor (TC 1.A.4) family. In terms of assembly, homotetramer.

It localises to the cell membrane. Its function is as follows. Essential for thermotaxis by sensing environmental temperature. Receptor-activated non-selective cation channel involved in detection of sensations such as temperature. Involved in heat nociception by being activated by warm temperature of about 24-29 degrees Celsius. The sequence is that of Transient receptor potential cation channel subfamily A member 1 (TrpA1) from Drosophila melanogaster (Fruit fly).